We begin with the raw amino-acid sequence, 454 residues long: Chromosomal replication initiator protein DnaA (454 aa).

The segment at 1 to 83 (MTEKEHFFWN…IKVEYVFDEA (83 aa)) is domain I, interacts with DnaA modulators. A domain II region spans residues 83–113 (ALVSETKPTLANNDFSNKREQQTPDLPTLNS). A domain III, AAA+ region region spans residues 114 to 332 (DLNSKYTFDN…GALKDISLVA (219 aa)). Positions 158, 160, 161, and 162 each coordinate ATP. Residues 333–454 (NVRQLDTITV…EIDTIKNKIK (122 aa)) form a domain IV, binds dsDNA region.

This sequence belongs to the DnaA family. As to quaternary structure, oligomerizes as a right-handed, spiral filament on DNA at oriC.

The protein resides in the cytoplasm. Plays an essential role in the initiation and regulation of chromosomal replication. ATP-DnaA binds to the origin of replication (oriC) to initiate formation of the DNA replication initiation complex once per cell cycle. Binds the DnaA box (a 9 base pair repeat at the origin) and separates the double-stranded (ds)DNA. Forms a right-handed helical filament on oriC DNA; dsDNA binds to the exterior of the filament while single-stranded (ss)DNA is stabiized in the filament's interior. The ATP-DnaA-oriC complex binds and stabilizes one strand of the AT-rich DNA unwinding element (DUE), permitting loading of DNA polymerase. After initiation quickly degrades to an ADP-DnaA complex that is not apt for DNA replication. Binds acidic phospholipids. The polypeptide is Chromosomal replication initiator protein DnaA (Streptococcus thermophilus (strain ATCC BAA-250 / LMG 18311)).